The primary structure comprises 437 residues: Enolase 2 (437 aa).

Residue Gln-162 coordinates (2R)-2-phosphoglycerate. The Proton donor role is filled by Glu-204. Mg(2+)-binding residues include Asp-251, Glu-297, and Asp-324. (2R)-2-phosphoglycerate-binding residues include Lys-349, Arg-378, Ser-379, and Lys-400. The active-site Proton acceptor is Lys-349.

The protein belongs to the enolase family. Requires Mg(2+) as cofactor.

The protein localises to the cytoplasm. It localises to the secreted. The protein resides in the cell surface. The enzyme catalyses (2R)-2-phosphoglycerate = phosphoenolpyruvate + H2O. It participates in carbohydrate degradation; glycolysis; pyruvate from D-glyceraldehyde 3-phosphate: step 4/5. In terms of biological role, catalyzes the reversible conversion of 2-phosphoglycerate (2-PG) into phosphoenolpyruvate (PEP). It is essential for the degradation of carbohydrates via glycolysis. The chain is Enolase 2 from Chlorobaculum tepidum (strain ATCC 49652 / DSM 12025 / NBRC 103806 / TLS) (Chlorobium tepidum).